The primary structure comprises 122 residues: MSDKTVKSTNLMAFVATKMLERQEDLDTCTEMQVEKMKTSTKARLKTESSFAPRTWEDAIKDKILRRSVDTSSLDKWQELKQELENVSDALKADSLWLPMKSLSLYSKVSNQEPSSIPIGEM.

Residues 96–105 (LWLPMKSLSL) carry the Nuclear export signal motif.

In terms of assembly, binds M1 protein. May interact with human nucleoporins and exportin XPO1/CRM1.

The protein resides in the virion. It is found in the host nucleus. Its function is as follows. Mediates the nuclear export of encapsidated genomic RNAs (ribonucleoproteins, RNPs). Acts as an adapter between viral RNPs complexes and the nuclear export machinery of the cell. Possesses no intrinsic RNA-binding activity, but includes a C-terminal M1-binding domain. This domain is believed to allow recognition of RNPs to which the M1 protein is bound. Because the M1 protein is not available in large quantities until the later stages of infection, such an indirect recognition mechanism probably ensures that genomic RNPs are not exported from the nucleus before sufficient quantities of viral mRNA and progeny genomic RNA have been synthesized. Furthermore, the RNPs enters the cytoplasm only when they have associated with the M1 protein that is necessary to guide them to the plasma membrane. May down-regulate viral RNA synthesis when overproduced. This chain is Nuclear export protein (NS), found in Homo sapiens (Human).